The primary structure comprises 376 residues: Ciliogenesis-associated TTC17-interacting protein (376 aa).

The segment at 355 to 376 is disordered; sequence TQEPNDPFVSSHHASPFRNVSH.

This sequence belongs to the CATIP family.

It is found in the nucleus. The protein resides in the cytoplasm. It localises to the cell membrane. The protein localises to the cytoskeleton. Plays a role in primary ciliogenesis by modulating actin polymerization. This chain is Ciliogenesis-associated TTC17-interacting protein (catip), found in Xenopus laevis (African clawed frog).